The following is a 309-amino-acid chain: Polyprenal reductase (309 aa).

Over 1–3 (MFH) the chain is Cytoplasmic. The helical transmembrane segment at 4–24 (ILSIVNIIWLLLALCFGAAFC) threads the bilayer. At 25-67 (LNKFSVKLPNRVEHVFQDFIRYGKTKENIKRASWQLVFDLSKR) the chain is on the lumenal side. Residues 68 to 88 (YFYHFYVVSVMWNGLLLLFSI) traverse the membrane as a helical segment. Residues 89–114 (RSVVMSEAFPDWIIDVLGSLTGRSRG) lie on the Cytoplasmic side of the membrane. The chain crosses the membrane as a helical span at residues 115-135 (AWNEIHLSTLLLQVLLWVHTL). The Lumenal portion of the chain corresponds to 136-150 (RRLLECLFVSVFSDG). Residues 151-171 (VINVVQYAFGLSYYIILGLTV) traverse the membrane as a helical segment. At 172 to 185 (LCTNDSLPQSESVS) the chain is on the cytoplasmic side. The chain crosses the membrane as a helical span at residues 186–206 (FFNQLTWYHVVGTLLFFWASF). The Lumenal portion of the chain corresponds to 207 to 255 (LQHQSLSLLAKMRTDSSGKVETLAHKMPCGGWFELVSCPHYLAELLIYA). A helical transmembrane segment spans residues 256 to 276 (AMCVCCGCASLTWWMVVLYVL). The Cytoplasmic segment spans residues 277–309 (CNQALAAQLCHEYYRSKFKTYPHHRKAFIPFVL).

The protein belongs to the steroid 5-alpha reductase family. Polyprenal reductase subfamily.

Its subcellular location is the endoplasmic reticulum membrane. The catalysed reaction is a di-trans,poly-cis-dolichal + NADP(+) = a di-trans,poly-cis-polyprenal + NADPH + H(+). The enzyme catalyses a 3-oxo-5alpha-steroid + NADP(+) = a 3-oxo-Delta(4)-steroid + NADPH + H(+). It catalyses the reaction androst-4-ene-3,17-dione + NADPH + H(+) = 5alpha-androstan-3,17-dione + NADP(+). It carries out the reaction 17beta-hydroxy-5alpha-androstan-3-one + NADP(+) = testosterone + NADPH + H(+). Its pathway is protein modification; protein glycosylation. In terms of biological role, plays a key role in early steps of protein N-linked glycosylation by being involved in the conversion of polyprenol into dolichol. Acts as a polyprenal reductase that mediates the reduction of polyprenal into dolichal in a NADP-dependent mechanism. Dolichols are required for the synthesis of dolichol-linked monosaccharides and the oligosaccharide precursor used for N-glycosylation. Also able to convert testosterone (T) into 5-alpha-dihydrotestosterone (DHT). This chain is Polyprenal reductase (srd5a3), found in Danio rerio (Zebrafish).